The chain runs to 452 residues: Tripartite motif-containing protein 49D (452 aa).

The RING-type zinc-finger motif lies at 15-56; the sequence is CPICLNYFIDPVTIDCGHSFCRPCFYLNWQDIPILTQCFECL. The B box-type zinc-finger motif lies at 88-129; it reads SEEQMCGTHRETKKIFCEVDRSLLCLLCSSSLEHRYHRHCPA. Zn(2+) is bound by residues Cys-93, His-96, Cys-115, and His-121. The region spanning 269-452 is the B30.2/SPRY domain; it reads ELRAGPITGL…LRPIFCCVHL (184 aa).

The protein belongs to the TRIM/RBCC family.

This is Tripartite motif-containing protein 49D from Homo sapiens (Human).